Reading from the N-terminus, the 237-residue chain is RING-H2 finger protein ATL57 (237 aa).

The helical transmembrane segment at 51 to 71 (ALTIFILLVALFFMGFFSVYF) threads the bilayer. The RING-type; atypical zinc finger occupies 140 to 182 (CVICLSDFEEGETVKVIPHCGHVFHVDCVDTWLSSYVTCPLCR).

The protein belongs to the RING-type zinc finger family. ATL subfamily.

The protein localises to the membrane. It carries out the reaction S-ubiquitinyl-[E2 ubiquitin-conjugating enzyme]-L-cysteine + [acceptor protein]-L-lysine = [E2 ubiquitin-conjugating enzyme]-L-cysteine + N(6)-ubiquitinyl-[acceptor protein]-L-lysine.. The protein operates within protein modification; protein ubiquitination. This is RING-H2 finger protein ATL57 (ATL57) from Arabidopsis thaliana (Mouse-ear cress).